The following is a 329-amino-acid chain: Red chlorophyll catabolite reductase 1, chloroplastic (329 aa).

Pro residues predominate over residues 1 to 11 (MLQLRSPPPAT). The transit peptide at 1-50 (MLQLRSPPPATSSPSSAVSFPTLAPRLLPLRRRRRGAGSQLGGKTSSAVR) directs the protein to the chloroplast. Positions 1–61 (MLQLRSPPPA…SSAAAPGATE (61 aa)) are disordered. Composition is skewed to low complexity over residues 12-28 (SSPS…PRLL) and 46-59 (SSAV…APGA). Red chlorophyll catabolite contacts are provided by residues Glu-163, 216–218 (YRS), and Asp-299.

Expressed in leaves. Expressed at low levels in roots, stems, panicles and seeds.

It localises to the plastid. The protein localises to the chloroplast. The enzyme catalyses primary fluorescent chlorophyll catabolite + 2 oxidized [2Fe-2S]-[ferredoxin] = red chlorophyll catabolite + 2 reduced [2Fe-2S]-[ferredoxin] + 3 H(+). It functions in the pathway porphyrin-containing compound metabolism; chlorophyll degradation. In terms of biological role, catalyzes the key reaction of chlorophyll catabolism, porphyrin macrocycle cleavage of pheophorbide a (pheide a) to a primary fluorescent catabolite (pFCC). Works in a two-step reaction with pheophorbide a oxygenase (PaO) by reducing the C20/C1 double bond of the intermediate, RCC. Belongs to the chlorophyll catabolic enzymes (CCEs). May play a role in senescence and response to wounding. The chain is Red chlorophyll catabolite reductase 1, chloroplastic from Oryza sativa subsp. japonica (Rice).